Consider the following 276-residue polypeptide: Large ribosomal subunit protein uL2 (276 aa).

Disordered regions lie at residues 1 to 60 (MSIK…RHKR) and 226 to 276 (NAVD…KRNQ). Residues 20 to 31 (SKEEITREEPEK) show a composition bias toward basic and acidic residues. Composition is skewed to basic residues over residues 50–60 (STRRQGGRHKR) and 258–276 (KTRR…KRNQ).

This sequence belongs to the universal ribosomal protein uL2 family. In terms of assembly, part of the 50S ribosomal subunit. Forms a bridge to the 30S subunit in the 70S ribosome.

Functionally, one of the primary rRNA binding proteins. Required for association of the 30S and 50S subunits to form the 70S ribosome, for tRNA binding and peptide bond formation. It has been suggested to have peptidyltransferase activity; this is somewhat controversial. Makes several contacts with the 16S rRNA in the 70S ribosome. The protein is Large ribosomal subunit protein uL2 of Natranaerobius thermophilus (strain ATCC BAA-1301 / DSM 18059 / JW/NM-WN-LF).